The sequence spans 358 residues: MKNLSAYEVYESPKTSGESRTEAVSEAAFESDPEVSAILVLTSSEASTLERVADLVTAHALYAAHDFCAQAQLAAAELPSRVVARLQEFAWGDMNEGHLLIKGLPQVRSLPPTPTSNVHAVAATTPMSRYQALINECVGRMIAYEAEGHGHTFQDMVPSAMSAHSQTSLGSAVELELHTEQAFSPLRPDFVSLACLRGDPRALTYLFSARQLVATLTTQEIAMLREPMWTTTVDESFLAEGRTFLLGFERGPIPILSGADDDPFIVFDQDLMRGISAPAQELQQTVIRAYYAERVSHCLAPGEMLLIDNRRAVHGRSIFAPRFDGADRFLSRSFIVADGSRSRHARSSFGRVVSARFS.

Positions 178, 180, and 314 each coordinate Fe cation. Arg328 lines the 2-oxoglutarate pocket.

It belongs to the clavaminate synthase family. Requires Fe(2+) as cofactor.

The catalysed reaction is L-lysine + 2-oxoglutarate + O2 = (3S)-3-hydroxy-L-lysine + succinate + CO2. Functionally, alpha-ketoglutarate-dependent dioxygenase that in vitro catalyzes the regio- and stereoselective hydroxylation of L-lysine, leading to (3S)-3-hydroxy-L-lysine. Can also use (5R)-5-hydroxy-L-lysine as substrate, but neither D-lysine nor L-ornithine. The protein is L-lysine 3-hydroxylase of Catenulispora acidiphila (strain DSM 44928 / JCM 14897 / NBRC 102108 / NRRL B-24433 / ID139908).